A 229-amino-acid chain; its full sequence is Uracil-DNA glycosylase (229 aa).

The Proton acceptor role is filled by aspartate 64.

The protein belongs to the uracil-DNA glycosylase (UDG) superfamily. UNG family.

The protein localises to the cytoplasm. The catalysed reaction is Hydrolyzes single-stranded DNA or mismatched double-stranded DNA and polynucleotides, releasing free uracil.. In terms of biological role, excises uracil residues from the DNA which can arise as a result of misincorporation of dUMP residues by DNA polymerase or due to deamination of cytosine. This chain is Uracil-DNA glycosylase, found in Escherichia fergusonii (strain ATCC 35469 / DSM 13698 / CCUG 18766 / IAM 14443 / JCM 21226 / LMG 7866 / NBRC 102419 / NCTC 12128 / CDC 0568-73).